We begin with the raw amino-acid sequence, 124 residues long: Small ribosomal subunit protein bS6 (124 aa).

Residues 96–124 (ETGPSPMMKEVQREEAKKAAAAQPTEAQA) form a disordered region. Low complexity predominate over residues 114–124 (AAAAQPTEAQA).

Belongs to the bacterial ribosomal protein bS6 family.

Its function is as follows. Binds together with bS18 to 16S ribosomal RNA. The sequence is that of Small ribosomal subunit protein bS6 from Burkholderia vietnamiensis (strain G4 / LMG 22486) (Burkholderia cepacia (strain R1808)).